The following is a 361-amino-acid chain: Phosphoserine aminotransferase (361 aa).

L-glutamate is bound at residue Arg-42. Residues 76–77 (AR), Trp-102, Thr-153, Asp-173, and Gln-196 each bind pyridoxal 5'-phosphate. Lys-197 carries the post-translational modification N6-(pyridoxal phosphate)lysine. 238–239 (NT) provides a ligand contact to pyridoxal 5'-phosphate.

It belongs to the class-V pyridoxal-phosphate-dependent aminotransferase family. SerC subfamily. Homodimer. Requires pyridoxal 5'-phosphate as cofactor.

It localises to the cytoplasm. It catalyses the reaction O-phospho-L-serine + 2-oxoglutarate = 3-phosphooxypyruvate + L-glutamate. The enzyme catalyses 4-(phosphooxy)-L-threonine + 2-oxoglutarate = (R)-3-hydroxy-2-oxo-4-phosphooxybutanoate + L-glutamate. The protein operates within amino-acid biosynthesis; L-serine biosynthesis; L-serine from 3-phospho-D-glycerate: step 2/3. It participates in cofactor biosynthesis; pyridoxine 5'-phosphate biosynthesis; pyridoxine 5'-phosphate from D-erythrose 4-phosphate: step 3/5. In terms of biological role, catalyzes the reversible conversion of 3-phosphohydroxypyruvate to phosphoserine and of 3-hydroxy-2-oxo-4-phosphonooxybutanoate to phosphohydroxythreonine. In Yersinia pseudotuberculosis serotype IB (strain PB1/+), this protein is Phosphoserine aminotransferase.